The primary structure comprises 1875 residues: Neuron navigator 1 (1875 aa).

Position 1 is an N-acetylmethionine (Met-1). The interval 1-63 (MLGSSVKSVQ…GGSGSMAKAS (63 aa)) is disordered. Residues Ser-93 and Ser-145 each carry the phosphoserine modification. 2 disordered regions span residues 115–230 (SDDM…EERA) and 280–339 (SSLR…VGGS). At Thr-162 the chain carries Phosphothreonine. Phosphoserine occurs at positions 197 and 202. The stretch at 258 to 283 (ESQRKRTVQNVLDLRQNLEETMSSLR) forms a coiled coil. A compositionally biased stretch (polar residues) spans 280-291 (SSLRGSQVTHSS). Residues Ser-299, Ser-311, Ser-315, Ser-365, and Ser-394 each carry the phosphoserine modification. Over residues 304–318 (PRSVSSLSNRSSPLS) the composition is skewed to low complexity. 2 disordered regions span residues 391 to 463 (GYMS…RTDS) and 477 to 783 (SESE…AELP). 2 stretches are compositionally biased toward low complexity: residues 414–428 (DESS…DASD) and 436–456 (NASS…RSST). A phosphoserine mark is found at Ser-455, Ser-477, Ser-479, and Ser-493. Positions 479-489 (SEEKTPKKLEY) are enriched in basic and acidic residues. The span at 506-522 (ERPESCDDASKGGELKK) shows a compositional bias: basic and acidic residues. Ser-531 bears the Phosphoserine mark. Residue Thr-537 is modified to Phosphothreonine. Phosphoserine is present on Ser-544. The residue at position 547 (Thr-547) is a Phosphothreonine. Basic and acidic residues predominate over residues 558–569 (GKPEGKATDKGK). Thr-575 is modified (phosphothreonine). The span at 584-594 (AGRDRLSDAKK) shows a compositional bias: basic and acidic residues. 2 stretches are compositionally biased toward polar residues: residues 618 to 638 (GTAT…QKSS) and 648 to 658 (RKTSLDVSNSV). Ser-651 is modified (phosphoserine). Position 690 is an omega-N-methylarginine (Arg-690). 2 stretches are compositionally biased toward polar residues: residues 696-712 (VSSS…QGGL) and 726-735 (GRSTPAPVNQ). Residues 733 to 758 (VNQTDREKEKAKAKAVALDSDNISLK) adopt a coiled-coil conformation. Phosphoserine occurs at positions 752, 756, 762, 799, and 810. Positions 753–772 (DNISLKSIGSPESTPKNQAS) are enriched in polar residues. Disordered stretches follow at residues 800–840 (LANL…PLPS) and 893–982 (MSLP…SPPA). Composition is skewed to low complexity over residues 807-818 (NSNSLDLPSSSD) and 893-902 (MSLPSAFPSS). The residue at position 998 (Ser-998) is a Phosphoserine. Thr-1004 carries the phosphothreonine modification. A coiled-coil region spans residues 1070–1161 (SSAEERMQSE…SEAQAVIQGA (92 aa)). At Thr-1168 the chain carries Phosphothreonine. Disordered regions lie at residues 1172-1202 (LRIK…KDAD), 1242-1306 (ATPD…KEVS), 1359-1381 (VAPG…LSSP), and 1808-1841 (KLYH…SLDS). At Ser-1179 the chain carries Phosphoserine. A compositionally biased stretch (low complexity) spans 1179 to 1198 (SSDSISSLNSITSHSSIGSS). The span at 1244–1259 (PDSSAPSSPKLQHGST) shows a compositional bias: polar residues. Residues 1260-1281 (ETASPSIKSSTSSSVGTEVTET) are compositionally biased toward low complexity. Ser-1263 bears the Phosphoserine mark. The stretch at 1301–1360 (EKKEVSELRSELWEKEMKLTDIRLEALNSAHQLDQLRETMHNMQLEVDLLKAENDRLKVA) forms a coiled coil. The span at 1365 to 1381 (SGCTPGQVPGSSALSSP) shows a compositional bias: polar residues. Ser-1380 carries the phosphoserine modification.

This sequence belongs to the Nav/unc-53 family. As to quaternary structure, interacts with tubulin. In terms of tissue distribution, expressed in heart and brain. Present in brain (at protein level). In adult brain, found almost exclusively in areas of secondary neurogenesis from the hippocampus and the subventricular zone.

Its subcellular location is the cytoplasm. It is found in the cytoskeleton. May be involved in neuronal migration. This Mus musculus (Mouse) protein is Neuron navigator 1 (Nav1).